We begin with the raw amino-acid sequence, 161 residues long: EP300-interacting inhibitor of differentiation 2B (161 aa).

Disordered stretches follow at residues 1-26 and 54-77; these read MAEP…GTAS and ARSM…GLAS.

As to quaternary structure, homodimer and heterodimer with EID2. Interacts with HDAC1 and HDAC2.

It localises to the nucleus. In terms of biological role, acts as a repressor of MYOD-dependent transcription, glucocorticoid receptor-dependent transcription, and muscle differentiation. This chain is EP300-interacting inhibitor of differentiation 2B, found in Homo sapiens (Human).